The chain runs to 65 residues: Keratin-associated protein 20-2 (65 aa).

It belongs to the KRTAP type 20 family. In terms of assembly, interacts with hair keratins.

In the hair cortex, hair keratin intermediate filaments are embedded in an interfilamentous matrix, consisting of hair keratin-associated proteins (KRTAP), which are essential for the formation of a rigid and resistant hair shaft through their extensive disulfide bond cross-linking with abundant cysteine residues of hair keratins. The matrix proteins include the high-sulfur and high-glycine-tyrosine keratins. The polypeptide is Keratin-associated protein 20-2 (KRTAP20-2) (Homo sapiens (Human)).